Reading from the N-terminus, the 101-residue chain is Large ribosomal subunit protein bL21 (101 aa).

Belongs to the bacterial ribosomal protein bL21 family. Part of the 50S ribosomal subunit. Contacts protein L20.

This protein binds to 23S rRNA in the presence of protein L20. The sequence is that of Large ribosomal subunit protein bL21 from Corynebacterium aurimucosum (strain ATCC 700975 / DSM 44827 / CIP 107346 / CN-1) (Corynebacterium nigricans).